Here is a 96-residue protein sequence, read N- to C-terminus: ATP synthase subunit c (96 aa).

2 consecutive transmembrane segments (helical) span residues 28–50 and 75–95; these read LGAGVAMGIGAIGPGVGEGNIGA and AVTESTGLYSLVVALILLFVL.

It belongs to the ATPase C chain family. In terms of assembly, F-type ATPases have 2 components, F(1) - the catalytic core - and F(0) - the membrane proton channel. F(1) has five subunits: alpha(3), beta(3), gamma(1), delta(1), epsilon(1). F(0) has three main subunits: a(1), b(2) and c(10-14). The alpha and beta chains form an alternating ring which encloses part of the gamma chain. F(1) is attached to F(0) by a central stalk formed by the gamma and epsilon chains, while a peripheral stalk is formed by the delta and b chains.

Its subcellular location is the cell inner membrane. Its function is as follows. F(1)F(0) ATP synthase produces ATP from ADP in the presence of a proton or sodium gradient. F-type ATPases consist of two structural domains, F(1) containing the extramembraneous catalytic core and F(0) containing the membrane proton channel, linked together by a central stalk and a peripheral stalk. During catalysis, ATP synthesis in the catalytic domain of F(1) is coupled via a rotary mechanism of the central stalk subunits to proton translocation. In terms of biological role, key component of the F(0) channel; it plays a direct role in translocation across the membrane. A homomeric c-ring of between 10-14 subunits forms the central stalk rotor element with the F(1) delta and epsilon subunits. This is ATP synthase subunit c from Petrotoga mobilis (strain DSM 10674 / SJ95).